The chain runs to 895 residues: Alanine--tRNA ligase (895 aa).

Zn(2+) contacts are provided by histidine 586, histidine 590, cysteine 690, and histidine 694.

It belongs to the class-II aminoacyl-tRNA synthetase family. The cofactor is Zn(2+).

It localises to the cytoplasm. The catalysed reaction is tRNA(Ala) + L-alanine + ATP = L-alanyl-tRNA(Ala) + AMP + diphosphate. Functionally, catalyzes the attachment of alanine to tRNA(Ala) in a two-step reaction: alanine is first activated by ATP to form Ala-AMP and then transferred to the acceptor end of tRNA(Ala). Also edits incorrectly charged Ser-tRNA(Ala) and Gly-tRNA(Ala) via its editing domain. The sequence is that of Alanine--tRNA ligase from Korarchaeum cryptofilum (strain OPF8).